The sequence spans 598 residues: Probable polysaccharide biosynthesis protein EpsC (598 aa).

The next 4 helical transmembrane spans lie at Met-1–Leu-21, Gly-31–Phe-51, Leu-63–Ile-83, and Val-87–Ile-107.

Belongs to the polysaccharide synthase family.

Its subcellular location is the cell membrane. Its function is as follows. Involved in biofilm formation. This chain is Probable polysaccharide biosynthesis protein EpsC (epsC), found in Bacillus subtilis (strain 168).